Here is an 87-residue protein sequence, read N- to C-terminus: Cytochrome c6 (87 aa).

Residues C14, C17, H18, and M58 each contribute to the heme c site.

The protein belongs to the cytochrome c family. PetJ subfamily. In terms of assembly, monomer. Binds 1 heme c group covalently per subunit.

Its subcellular location is the cellular thylakoid lumen. Functionally, functions as an electron carrier between membrane-bound cytochrome b6-f and photosystem I in oxygenic photosynthesis. The polypeptide is Cytochrome c6 (petJ) (Parathermosynechococcus lividus (Thermostichus lividus)).